The sequence spans 411 residues: Translation initiation factor 2 subunit gamma (411 aa).

The tr-type G domain occupies 9 to 201 (QPTVNIGMVG…AIEKYIPTPE (193 aa)). A G1 region spans residues 18-25 (GHVDHGKS). Mg(2+) is bound by residues Asp21, Ser25, Gly46, and Ser48. A GTP-binding site is contributed by 21–26 (DHGKST). The tract at residues 46-50 (GISIK) is G2. The interval 88–91 (DAPG) is G3. Residues 144–147 (NKID) and 179–181 (SAY) each bind GTP. The G4 stretch occupies residues 144–147 (NKID). Residues 179 to 181 (SAY) form a G5 region.

The protein belongs to the TRAFAC class translation factor GTPase superfamily. Classic translation factor GTPase family. EIF2G subfamily. As to quaternary structure, heterotrimer composed of an alpha, a beta and a gamma chain. Requires Mg(2+) as cofactor.

It catalyses the reaction GTP + H2O = GDP + phosphate + H(+). Functionally, eIF-2 functions in the early steps of protein synthesis by forming a ternary complex with GTP and initiator tRNA. The polypeptide is Translation initiation factor 2 subunit gamma (Thermoplasma volcanium (strain ATCC 51530 / DSM 4299 / JCM 9571 / NBRC 15438 / GSS1)).